The following is a 224-amino-acid chain: A-factor barrier protein 1 (224 aa).

The first 25 residues, 1 to 25 (MIFAPSFSLIKNILLVSFLISHSFA), serve as a signal peptide directing secretion. N148, N181, and N191 each carry an N-linked (GlcNAc...) asparagine glycan. A lipid anchor (GPI-anchor amidated asparagine) is attached at N203. Residues 204–224 (GAHAKSLYFPMALFGIFAVAL) constitute a propeptide, removed in mature form.

This sequence belongs to the SRP1/TIP1 family. In terms of processing, the GPI-anchor is attached to the protein in the endoplasmic reticulum and serves to target the protein to the cell surface. There, the glucosamine-inositol phospholipid moiety is cleaved off and the GPI-modified mannoprotein is covalently attached via its lipidless GPI glycan remnant to the 1,6-beta-glucan of the outer cell wall layer.

It is found in the secreted. The protein localises to the cell wall. The protein resides in the membrane. MATalpha-specific protein that interferes with a-factor, the pheromone secreted by MATa cells. Contributes to mating efficiency. Acts to bind and sequester a-factor rather than to degrade it, and promotes the efficient mating of MATalpha cells by keeping the a-factor concentration at the plasma membrane within the narrow range needed for accurate pheromone gradient detection. The polypeptide is A-factor barrier protein 1 (Saccharomyces cerevisiae (strain ATCC 204508 / S288c) (Baker's yeast)).